The following is a 731-amino-acid chain: 1,4-alpha-glucan branching enzyme GlgB (731 aa).

Aspartate 408 functions as the Nucleophile in the catalytic mechanism. The active-site Proton donor is the glutamate 461.

This sequence belongs to the glycosyl hydrolase 13 family. GlgB subfamily. As to quaternary structure, monomer.

It carries out the reaction Transfers a segment of a (1-&gt;4)-alpha-D-glucan chain to a primary hydroxy group in a similar glucan chain.. Its pathway is glycan biosynthesis; glycogen biosynthesis. Catalyzes the formation of the alpha-1,6-glucosidic linkages in glycogen by scission of a 1,4-alpha-linked oligosaccharide from growing alpha-1,4-glucan chains and the subsequent attachment of the oligosaccharide to the alpha-1,6 position. This is 1,4-alpha-glucan branching enzyme GlgB from Corynebacterium efficiens (strain DSM 44549 / YS-314 / AJ 12310 / JCM 11189 / NBRC 100395).